The chain runs to 109 residues: Large ribosomal subunit protein uL22 (109 aa).

It belongs to the universal ribosomal protein uL22 family. As to quaternary structure, part of the 50S ribosomal subunit.

Functionally, this protein binds specifically to 23S rRNA; its binding is stimulated by other ribosomal proteins, e.g. L4, L17, and L20. It is important during the early stages of 50S assembly. It makes multiple contacts with different domains of the 23S rRNA in the assembled 50S subunit and ribosome. In terms of biological role, the globular domain of the protein is located near the polypeptide exit tunnel on the outside of the subunit, while an extended beta-hairpin is found that lines the wall of the exit tunnel in the center of the 70S ribosome. The protein is Large ribosomal subunit protein uL22 of Azoarcus sp. (strain BH72).